The following is a 225-amino-acid chain: 2-C-methyl-D-erythritol 4-phosphate cytidylyltransferase (225 aa).

It belongs to the IspD/TarI cytidylyltransferase family. IspD subfamily.

The catalysed reaction is 2-C-methyl-D-erythritol 4-phosphate + CTP + H(+) = 4-CDP-2-C-methyl-D-erythritol + diphosphate. Its pathway is isoprenoid biosynthesis; isopentenyl diphosphate biosynthesis via DXP pathway; isopentenyl diphosphate from 1-deoxy-D-xylulose 5-phosphate: step 2/6. Catalyzes the formation of 4-diphosphocytidyl-2-C-methyl-D-erythritol from CTP and 2-C-methyl-D-erythritol 4-phosphate (MEP). This Cereibacter sphaeroides (strain ATCC 17029 / ATH 2.4.9) (Rhodobacter sphaeroides) protein is 2-C-methyl-D-erythritol 4-phosphate cytidylyltransferase.